Consider the following 271-residue polypeptide: Dipeptidyl-peptidase 6 (271 aa).

SH3b domains lie at 1–64 (MNAI…LFDD) and 72–140 (QKAQ…HPKI). The region spanning 148–268 (HAFRENVVQT…DLATTITAIG (121 aa)) is the NlpC/P60 domain. Cys-178 (nucleophile) is an active-site residue. His-224 functions as the Proton acceptor in the catalytic mechanism. His-236 is an active-site residue.

The protein belongs to the peptidase C40 family.

The protein localises to the cytoplasm. Functionally, involved in cell sporulation. Hydrolyzes gamma-D-Glu-L-(meso)A2pm linkages only in those peptide units that have a free N-terminal L-alanine. This Lysinibacillus sphaericus (Bacillus sphaericus) protein is Dipeptidyl-peptidase 6.